Consider the following 146-residue polypeptide: uncharacterized protein (146 aa).

The tract at residues 67 to 93 is disordered; the sequence is DDNGMESGFCSGATSTGQSASTSPAPV. The span at 77–92 shows a compositional bias: low complexity; the sequence is SGATSTGQSASTSPAP.

This is an uncharacterized protein from Caenorhabditis elegans.